Reading from the N-terminus, the 728-residue chain is MSDRIDRDVINALIAGHFADPFSVLGMHKTTAGLEVRALLPDATDVWVIEPKTGRKLAKLECLDSRGFFSGVIPRRKNFFRYQLAVVWHGQQNLIDDPYRFGPLIQEMDAWLLSEGTHLRPYETLGAHADTMDGVTGTRFSVWAPNARRVSVVGQFNYWDGRRHPMRLRKESGIWELFIPGAHNGQLYKYEMIDANGNLRLKSDPYAFEAQMRPETASLICGLPEKVVQTEERKKANQFDAPISIYEVHLGSWRRHTDNNFWLSYRELADQLVPYAKWMGFTHLELLPINEHPFDGSWGYQPTGLYAPTRRFGTRDDFRYFIDAAHAAGLNVILDWVPGHFPTDDFALAEFDGTNLYEHSDPREGYHQDWNTLIYNYGRREVSNFLVGNALYWIERFGIDALRVDAVASMIYRDYSRKEGEWIPNEFGGRENLEAIEFLRNTNRILGEQVSGAVTMAEESTDFPGVSRPQDMGGLGFWYKWNLGWMHDTLDYMKLDPIYRQYHHDKLTFGMLYNYTENFVLPLSHDEVVHGKKSILDRMPGDAWQKFANLRAYYGWMWAFPGKKLLFMGNEFAQGREWNHDASLDWHLLEGGDNWHHGVQRLVRDLNLTYRHHKAMHELDFDPYGFEWLVVDDKERSVLIFVRRDKEGNEIIVASNFTPVPRHDYRFGINQPGKWREILNTDSIHYHGSNAGNGGTVHSDEIASHGRQHSLSLTLPPLATIWLVREAE.

Asp405 (nucleophile) is an active-site residue. Glu458 acts as the Proton donor in catalysis.

The protein belongs to the glycosyl hydrolase 13 family. GlgB subfamily. Monomer.

It catalyses the reaction Transfers a segment of a (1-&gt;4)-alpha-D-glucan chain to a primary hydroxy group in a similar glucan chain.. The protein operates within glycan biosynthesis; glycogen biosynthesis. Functionally, catalyzes the formation of the alpha-1,6-glucosidic linkages in glycogen by scission of a 1,4-alpha-linked oligosaccharide from growing alpha-1,4-glucan chains and the subsequent attachment of the oligosaccharide to the alpha-1,6 position. The polypeptide is 1,4-alpha-glucan branching enzyme GlgB (Shigella flexneri).